The sequence spans 145 residues: Anaerobic nitrite reductase NSHB5 (145 aa).

In terms of domain architecture, Globin spans 2-142 (GFSETQEELV…LAAAIKEEMK (141 aa)). Residues 35–39 (EIAPA) carry the Homodimerization motif. The heme b site is built by Ser45, His59, Lys61, Arg84, Thr88, and His89. A Homodimerization motif is present at residues 96–108 (DAYFEVVKTALLD).

This sequence belongs to the plant globin family. Homodimer. The cofactor is heme b. As to expression, expressed in embryonic (embryos, coleoptiles and seminal roots) and vegetative (leaves and roots) organs.

Its subcellular location is the cytoplasm. It is found in the nucleus. The enzyme catalyses Fe(III)-heme b-[protein] + nitric oxide + H2O = Fe(II)-heme b-[protein] + nitrite + 2 H(+). Phytoglobin that reduces nitrite to nitric oxide under anoxic conditions (e.g. during flooding or in waterlogged soil). May not function as an oxygen storage or transport protein. Has an unusually high affinity for O(2) through an hexacoordinate heme iron because of a very low dissociation constant. This chain is Anaerobic nitrite reductase NSHB5, found in Oryza sativa subsp. japonica (Rice).